Reading from the N-terminus, the 228-residue chain is UPF0758 protein Reut_A2732 (228 aa).

An MPN domain is found at 102–224; it reads GLDSPAAVRS…VHSFAEHGEL (123 aa). 3 residues coordinate Zn(2+): H173, H175, and D186. Residues 173-186 carry the JAMM motif motif; sequence HNHPSGCCTPSQSD.

The protein belongs to the UPF0758 family.

This Cupriavidus pinatubonensis (strain JMP 134 / LMG 1197) (Cupriavidus necator (strain JMP 134)) protein is UPF0758 protein Reut_A2732.